The sequence spans 340 residues: Phenylalanine--tRNA ligase alpha subunit (340 aa).

Position 254 (Glu-254) interacts with Mg(2+).

This sequence belongs to the class-II aminoacyl-tRNA synthetase family. Phe-tRNA synthetase alpha subunit type 1 subfamily. In terms of assembly, tetramer of two alpha and two beta subunits. It depends on Mg(2+) as a cofactor.

It is found in the cytoplasm. The enzyme catalyses tRNA(Phe) + L-phenylalanine + ATP = L-phenylalanyl-tRNA(Phe) + AMP + diphosphate + H(+). This is Phenylalanine--tRNA ligase alpha subunit from Caldicellulosiruptor bescii (strain ATCC BAA-1888 / DSM 6725 / KCTC 15123 / Z-1320) (Anaerocellum thermophilum).